The sequence spans 684 residues: Gabija protein GajB (684 aa).

The UvrD-like helicase ATP-binding domain maps to 14–351 (EQKSINAIFN…IEVINKIRND (338 aa)). Position 35–42 (35–42 (SGAGAGKT)) interacts with ATP.

This sequence belongs to the helicase family. In terms of assembly, homodimer. Interacts with GajA; 2 GajB dimers dock at opposite sides of the GajA complex to form a 4:4 GajA-GajB assembly (GajAB). GajAB interacts with Bacillus phage Phi3T Gad1 protein; this interaction forms a 4:4:8 GajAB-Gad1 complex and leads to GajAB inhibition.

Component of antiviral defense system Gabija type II, composed of GajA and GajB. Expression of Gabija type II in B.subtilis (strain BEST7003) confers resistance to phages phi105, and SpBeta. May be a helicase or contribute to GajA activation. The sequence is that of Gabija protein GajB from Bacillus cereus (strain HuB5-5).